Consider the following 95-residue polypeptide: Co-chaperonin GroES (95 aa).

It belongs to the GroES chaperonin family. As to quaternary structure, heptamer of 7 subunits arranged in a ring. Interacts with the chaperonin GroEL.

The protein localises to the cytoplasm. Together with the chaperonin GroEL, plays an essential role in assisting protein folding. The GroEL-GroES system forms a nano-cage that allows encapsulation of the non-native substrate proteins and provides a physical environment optimized to promote and accelerate protein folding. GroES binds to the apical surface of the GroEL ring, thereby capping the opening of the GroEL channel. The polypeptide is Co-chaperonin GroES (Xylella fastidiosa (strain M23)).